A 245-amino-acid chain; its full sequence is 1-(5-phosphoribosyl)-5-[(5-phosphoribosylamino)methylideneamino] imidazole-4-carboxamide isomerase (245 aa).

Residue Asp8 is the Proton acceptor of the active site. Asp130 (proton donor) is an active-site residue.

It belongs to the HisA/HisF family.

It localises to the cytoplasm. It carries out the reaction 1-(5-phospho-beta-D-ribosyl)-5-[(5-phospho-beta-D-ribosylamino)methylideneamino]imidazole-4-carboxamide = 5-[(5-phospho-1-deoxy-D-ribulos-1-ylimino)methylamino]-1-(5-phospho-beta-D-ribosyl)imidazole-4-carboxamide. Its pathway is amino-acid biosynthesis; L-histidine biosynthesis; L-histidine from 5-phospho-alpha-D-ribose 1-diphosphate: step 4/9. The protein is 1-(5-phosphoribosyl)-5-[(5-phosphoribosylamino)methylideneamino] imidazole-4-carboxamide isomerase of Azotobacter vinelandii (strain DJ / ATCC BAA-1303).